The chain runs to 250 residues: 5-oxoprolinase subunit A (250 aa).

This sequence belongs to the LamB/PxpA family. As to quaternary structure, forms a complex composed of PxpA, PxpB and PxpC.

The enzyme catalyses 5-oxo-L-proline + ATP + 2 H2O = L-glutamate + ADP + phosphate + H(+). In terms of biological role, catalyzes the cleavage of 5-oxoproline to form L-glutamate coupled to the hydrolysis of ATP to ADP and inorganic phosphate. The protein is 5-oxoprolinase subunit A of Paraburkholderia phymatum (strain DSM 17167 / CIP 108236 / LMG 21445 / STM815) (Burkholderia phymatum).